A 330-amino-acid polypeptide reads, in one-letter code: Aspartate--ammonia ligase (330 aa).

This sequence belongs to the class-II aminoacyl-tRNA synthetase family. AsnA subfamily.

Its subcellular location is the cytoplasm. It catalyses the reaction L-aspartate + NH4(+) + ATP = L-asparagine + AMP + diphosphate + H(+). Its pathway is amino-acid biosynthesis; L-asparagine biosynthesis; L-asparagine from L-aspartate (ammonia route): step 1/1. In Escherichia coli O8 (strain IAI1), this protein is Aspartate--ammonia ligase.